Reading from the N-terminus, the 368-residue chain is MQFESDFRFDMDDSFSMCSQTLPCPSAGSSFSSASSAYEPFTPTSRRSTPNELSLDFEGAYNPFATHHSELTSPSGHMSKYMFGGPVKGEPEHMSFNEALPTTPMKKLDGMVTPDYDHMLEMNLASRHSIGSITPSGSFPMYTISPTTMGPTSFMMTPTHSLSGSEIAESTSSWSCSNESPISFFPQRGLGPLELEGLDMDRHPQSPLGTYHLHAPPSPGRLRAHRKMMVHEIQRKTNELQRAQIRASRKVSGSKSDGGVDVVRRAMCKCDYPGCHKAFRRNEHLKRHKQTFHGEGPNRFSCEFCGKDQFNRQDNLNNHRKLHARPNSRNRGVEFIPAAVPIIEQEERSRKRRAPPKSKSADKRVDDY.

The segment at 268 to 292 (CKCDYPGCHKAFRRNEHLKRHKQTF) adopts a C2H2-type 1; degenerate zinc-finger fold. A C2H2-type 2 zinc finger spans residues 300 to 323 (FSCEFCGKDQFNRQDNLNNHRKLH). The tract at residues 338-368 (AAVPIIEQEERSRKRRAPPKSKSADKRVDDY) is disordered. Basic and acidic residues predominate over residues 359-368 (KSADKRVDDY).

The protein localises to the nucleus. In terms of biological role, brlA, abaA and wetA are pivotal regulators of conidiophore development and conidium maturation. They act individually and together to regulate their own expression and that of numerous other sporulation-specific genes. BrlA, abaA and wetA act together to positively regulate the expression of the Pks1 gene cluster that mediates the biosynthesis of an anthraquinone derivative pigment that contributes to conidial pigmentation that provides protection from UV radiation, heat and cold stress. This is C2H2 type master regulator of conidiophore development BrlA from Metarhizium robertsii (strain ARSEF 23 / ATCC MYA-3075) (Metarhizium anisopliae (strain ARSEF 23)).